The following is a 172-amino-acid chain: Large ribosomal subunit protein uL10 (172 aa).

It belongs to the universal ribosomal protein uL10 family. In terms of assembly, part of the ribosomal stalk of the 50S ribosomal subunit. The N-terminus interacts with L11 and the large rRNA to form the base of the stalk. The C-terminus forms an elongated spine to which L12 dimers bind in a sequential fashion forming a multimeric L10(L12)X complex.

Forms part of the ribosomal stalk, playing a central role in the interaction of the ribosome with GTP-bound translation factors. The chain is Large ribosomal subunit protein uL10 from Rhodopseudomonas palustris (strain BisA53).